A 176-amino-acid polypeptide reads, in one-letter code: Ribosome maturation factor RimM (176 aa).

A PRC barrel domain is found at 93–166 (EGEYYHADLI…RVVIELPAEI (74 aa)).

It belongs to the RimM family. Binds ribosomal protein uS19.

Its subcellular location is the cytoplasm. Functionally, an accessory protein needed during the final step in the assembly of 30S ribosomal subunit, possibly for assembly of the head region. Essential for efficient processing of 16S rRNA. May be needed both before and after RbfA during the maturation of 16S rRNA. It has affinity for free ribosomal 30S subunits but not for 70S ribosomes. The chain is Ribosome maturation factor RimM from Rhodopseudomonas palustris (strain BisB18).